A 439-amino-acid polypeptide reads, in one-letter code: Ornithine aminotransferase, mitochondrial (439 aa).

Residues 1 to 25 (MLSKLARLQTVAGLGLGVHSSVASA) constitute a mitochondrion transit peptide. K49 and K66 each carry N6-acetyllysine. K102 carries the N6-succinyllysine modification. K107 is subject to N6-acetyllysine; alternate. N6-succinyllysine; alternate is present on K107. K292 is subject to N6-(pyridoxal phosphate)lysine. K362 carries the post-translational modification N6-acetyllysine; alternate. At K362 the chain carries N6-succinyllysine; alternate. Residues K386 and K392 each carry the N6-acetyllysine modification. K405 carries the post-translational modification N6-acetyllysine; alternate. Residue K405 is modified to N6-succinyllysine; alternate. K421 carries the N6-acetyllysine modification.

It belongs to the class-III pyridoxal-phosphate-dependent aminotransferase family. Homohexamer. It depends on pyridoxal 5'-phosphate as a cofactor.

The protein resides in the mitochondrion matrix. It catalyses the reaction L-ornithine + 2-oxoglutarate = L-glutamate 5-semialdehyde + L-glutamate. Its pathway is amino-acid biosynthesis; L-proline biosynthesis; L-glutamate 5-semialdehyde from L-ornithine: step 1/1. Its function is as follows. Catalyzes the reversible interconversion of L-ornithine and 2-oxoglutarate to L-glutamate semialdehyde and L-glutamate. This chain is Ornithine aminotransferase, mitochondrial (OAT), found in Bos taurus (Bovine).